The following is a 111-amino-acid chain: Protein BEX3 (111 aa).

The segment at 1–63 (MANIHQENEE…RQINDGMGGD (63 aa)) is disordered. An interaction with p75NTR/NGFR region spans residues 68-93 (EIFMEEMREIRRKLRELQLRNCLRIL). Residues 68-111 (EIFMEEMREIRRKLRELQLRNCLRILMGELSNHHDHHDEFCLMP) form an interaction with 14-3-3 epsilon region. The short motif at 77 to 87 (IRRKLRELQLR) is the Nuclear export signal element. The his cluster stretch occupies residues 100–104 (HHDHH). Residue cysteine 108 participates in Zn(2+) binding.

This sequence belongs to the BEX family. As to quaternary structure, self-associates. Binds to the DEATH domain of p75NTR/NGFR. Interacts with 14-3-3 epsilon (YWHAE). Interacts with DIABLO/SMAC. In terms of processing, ubiquitinated. Degraded by the proteasome. Found in ovarian granulosa cells, testis, prostate and seminal vesicle tissue. High levels also detected in liver.

It is found in the nucleus. The protein localises to the cytoplasm. It localises to the cytosol. In terms of biological role, may be a signaling adapter molecule involved in NGFR/p75NTR-mediated apoptosis induced by NGF. Plays a role in zinc-triggered neuronal death. In absence of reductive stress, acts as a pseudosubstrate for the CRL2(FEM1B) complex: associates with FEM1B via zinc, thereby preventing association between FEM1B and its substrates. The sequence is that of Protein BEX3 from Homo sapiens (Human).